The following is a 389-amino-acid chain: Flap endonuclease 1 (389 aa).

The segment at 1–110 (MGIKGLMKLL…GELAKRSDRR (110 aa)) is N-domain. Residue Asp-35 coordinates Mg(2+). 2 residues coordinate DNA: Arg-48 and Arg-76. Asp-92 is a binding site for Mg(2+). The tract at residues 103 to 124 (LAKRSDRRQEAQKALEEATEKG) is disordered. An I-domain region spans residues 128 to 259 (DIDRFNKRLV…KKAYAGIKEH (132 aa)). 4 residues coordinate Mg(2+): Glu-164, Glu-166, Asp-185, and Asp-187. Glu-164 contacts DNA. Positions 237 and 239 each coordinate DNA. Position 239 (Asp-239) interacts with Mg(2+). The interaction with PCNA stretch occupies residues 350–358 (SQKRLDSFF). Positions 362 to 389 (PSANGAKKRKAPAAKGGKKAATAKKGKK) are disordered. The segment covering 367-389 (AKKRKAPAAKGGKKAATAKKGKK) has biased composition (basic residues).

This sequence belongs to the XPG/RAD2 endonuclease family. FEN1 subfamily. Interacts with PCNA. Three molecules of FEN1 bind to one PCNA trimer with each molecule binding to one PCNA monomer. PCNA stimulates the nuclease activity without altering cleavage specificity. Mg(2+) is required as a cofactor. In terms of processing, phosphorylated. Phosphorylation upon DNA damage induces relocalization to the nuclear plasma.

The protein resides in the nucleus. It localises to the nucleolus. Its subcellular location is the nucleoplasm. It is found in the mitochondrion. In terms of biological role, structure-specific nuclease with 5'-flap endonuclease and 5'-3' exonuclease activities involved in DNA replication and repair. During DNA replication, cleaves the 5'-overhanging flap structure that is generated by displacement synthesis when DNA polymerase encounters the 5'-end of a downstream Okazaki fragment. It enters the flap from the 5'-end and then tracks to cleave the flap base, leaving a nick for ligation. Also involved in the long patch base excision repair (LP-BER) pathway, by cleaving within the apurinic/apyrimidinic (AP) site-terminated flap. Acts as a genome stabilization factor that prevents flaps from equilibrating into structures that lead to duplications and deletions. Also possesses 5'-3' exonuclease activity on nicked or gapped double-stranded DNA, and exhibits RNase H activity. Also involved in replication and repair of rDNA and in repairing mitochondrial DNA. This chain is Flap endonuclease 1, found in Phytophthora infestans (strain T30-4) (Potato late blight agent).